A 413-amino-acid polypeptide reads, in one-letter code: Synaptosomal-associated protein 47 (413 aa).

In terms of domain architecture, t-SNARE coiled-coil homology 1 spans 109–171 (AANIPSHVTR…DVADRLLTEL (63 aa)). The disordered stretch occupies residues 321-342 (RHAASRPKGCTPHRELPTGGQE). The region spanning 350-412 (KNLPLFSEGE…DKQNRRMRKL (63 aa)) is the t-SNARE coiled-coil homology 2 domain.

Belongs to the SVAP1 family. As to quaternary structure, associates with the BLOC-1 complex. Interacts with BLOC1S6. Forms a complex containing SNAP47, VAMP2 and STX1A. As to expression, ubiquitously expressed with the most abundant expression in the brain. In brain, most highly expressed in the glomerular layer of the olfactory bulb, the cortex, striatum, hippocampus, and colliculi (at protein level).

Its subcellular location is the endomembrane system. The protein resides in the cytoplasm. It localises to the perinuclear region. Its function is as follows. May play a role in intracellular membrane fusion. This Mus musculus (Mouse) protein is Synaptosomal-associated protein 47 (Snap47).